The following is a 204-amino-acid chain: Ribosome maturation factor RimP (204 aa).

Belongs to the RimP family.

The protein localises to the cytoplasm. In terms of biological role, required for maturation of 30S ribosomal subunits. The polypeptide is Ribosome maturation factor RimP (Albidiferax ferrireducens (strain ATCC BAA-621 / DSM 15236 / T118) (Rhodoferax ferrireducens)).